We begin with the raw amino-acid sequence, 132 residues long: UPF0146 protein PF0123 (132 aa).

It belongs to the UPF0146 family.

This chain is UPF0146 protein PF0123, found in Pyrococcus furiosus (strain ATCC 43587 / DSM 3638 / JCM 8422 / Vc1).